Reading from the N-terminus, the 750-residue chain is Photosystem I P700 chlorophyll a apoprotein A1 (750 aa).

Transmembrane regions (helical) follow at residues 70 to 93 (VFSA…FHGA), 156 to 179 (LYCT…FHYH), 195 to 219 (LNHH…HVSL), 291 to 309 (IAHH…GHMY), 346 to 369 (WHAQ…HHMY), 385 to 411 (LSLF…IFMV), 433 to 455 (AIIS…LYIH), and 531 to 549 (FLVH…LILL). The [4Fe-4S] cluster site is built by Cys573 and Cys582. 2 consecutive transmembrane segments (helical) span residues 589–610 (HVFL…HFSW) and 664–686 (LSAY…MFLF). His675 provides a ligand contact to chlorophyll a'. Chlorophyll a contacts are provided by Met683 and Tyr691. A phylloquinone-binding site is contributed by Trp692. The helical transmembrane segment at 724 to 744 (AVGVTHYLLGGIATTWAFFLA) threads the bilayer.

This sequence belongs to the PsaA/PsaB family. The PsaA/B heterodimer binds the P700 chlorophyll special pair and subsequent electron acceptors. PSI consists of a core antenna complex that captures photons, and an electron transfer chain that converts photonic excitation into a charge separation. The eukaryotic PSI reaction center is composed of at least 11 subunits. The cofactor is P700 is a chlorophyll a/chlorophyll a' dimer, A0 is one or more chlorophyll a, A1 is one or both phylloquinones and FX is a shared 4Fe-4S iron-sulfur center..

Its subcellular location is the plastid. The protein localises to the chloroplast thylakoid membrane. It catalyses the reaction reduced [plastocyanin] + hnu + oxidized [2Fe-2S]-[ferredoxin] = oxidized [plastocyanin] + reduced [2Fe-2S]-[ferredoxin]. Functionally, psaA and PsaB bind P700, the primary electron donor of photosystem I (PSI), as well as the electron acceptors A0, A1 and FX. PSI is a plastocyanin-ferredoxin oxidoreductase, converting photonic excitation into a charge separation, which transfers an electron from the donor P700 chlorophyll pair to the spectroscopically characterized acceptors A0, A1, FX, FA and FB in turn. Oxidized P700 is reduced on the lumenal side of the thylakoid membrane by plastocyanin. The polypeptide is Photosystem I P700 chlorophyll a apoprotein A1 (Lobularia maritima (Sweet alyssum)).